Reading from the N-terminus, the 132-residue chain is Proline-rich protein sgp2 (132 aa).

Residues 1–20 (MKYCFVFFVTLICLIANCSA) form the signal peptide. 2 disordered regions span residues 23-62 (EGDK…SNSR) and 87-132 (GASV…LGLP). A compositionally biased stretch (basic and acidic residues) spans 36 to 47 (KQIERASDKTSE). Residues 51–62 (GNTNAQGDSNSR) are compositionally biased toward polar residues. Positions 91–105 (PQLPDLPTTPSLPDM) are enriched in low complexity.

Its subcellular location is the secreted. The chain is Proline-rich protein sgp2 (sgp2) from Glossina morsitans morsitans (Savannah tsetse fly).